Reading from the N-terminus, the 138-residue chain is Nucleoside diphosphate kinase (138 aa).

Positions 10, 58, 86, 92, 103, and 113 each coordinate ATP. The active-site Pros-phosphohistidine intermediate is His116.

The protein belongs to the NDK family. Homotetramer. Mg(2+) serves as cofactor.

It is found in the cytoplasm. The catalysed reaction is a 2'-deoxyribonucleoside 5'-diphosphate + ATP = a 2'-deoxyribonucleoside 5'-triphosphate + ADP. The enzyme catalyses a ribonucleoside 5'-diphosphate + ATP = a ribonucleoside 5'-triphosphate + ADP. Major role in the synthesis of nucleoside triphosphates other than ATP. The ATP gamma phosphate is transferred to the NDP beta phosphate via a ping-pong mechanism, using a phosphorylated active-site intermediate. The chain is Nucleoside diphosphate kinase from Actinobacillus pleuropneumoniae serotype 5b (strain L20).